We begin with the raw amino-acid sequence, 494 residues long: Ketol-acid reductoisomerase (NADP(+)) (494 aa).

Positions 14–208 (LDQLGRCRFM…GGHRAGCLES (195 aa)) constitute a KARI N-terminal Rossmann domain. Residues 45–48 (CGAQ), R68, R76, S78, and 108–110 (DKQ) contribute to the NADP(+) site. The active site involves H132. G158 lines the NADP(+) pocket. KARI C-terminal knotted domains lie at 209 to 344 (SFVA…NYPS) and 345 to 487 (TDVE…MTDM). D217, E221, E389, and E393 together coordinate Mg(2+). A substrate-binding site is contributed by S414.

The protein belongs to the ketol-acid reductoisomerase family. It depends on Mg(2+) as a cofactor.

The enzyme catalyses (2R)-2,3-dihydroxy-3-methylbutanoate + NADP(+) = (2S)-2-acetolactate + NADPH + H(+). It carries out the reaction (2R,3R)-2,3-dihydroxy-3-methylpentanoate + NADP(+) = (S)-2-ethyl-2-hydroxy-3-oxobutanoate + NADPH + H(+). It participates in amino-acid biosynthesis; L-isoleucine biosynthesis; L-isoleucine from 2-oxobutanoate: step 2/4. The protein operates within amino-acid biosynthesis; L-valine biosynthesis; L-valine from pyruvate: step 2/4. Involved in the biosynthesis of branched-chain amino acids (BCAA). Catalyzes an alkyl-migration followed by a ketol-acid reduction of (S)-2-acetolactate (S2AL) to yield (R)-2,3-dihydroxy-isovalerate. In the isomerase reaction, S2AL is rearranged via a Mg-dependent methyl migration to produce 3-hydroxy-3-methyl-2-ketobutyrate (HMKB). In the reductase reaction, this 2-ketoacid undergoes a metal-dependent reduction by NADPH to yield (R)-2,3-dihydroxy-isovalerate. The chain is Ketol-acid reductoisomerase (NADP(+)) from Vibrio vulnificus (strain CMCP6).